Here is a 2543-residue protein sequence, read N- to C-terminus: Polyketide synthase PksR (2543 aa).

The methyltransferase stretch occupies residues 165–269; sequence LEIGAGTGGT…KAVLKKNGLL (105 aa). The 77-residue stretch at 376–452 folds into the Carrier 1 domain; sequence SLIEQTAQFV…ELVEYLVKGH (77 aa). O-(pantetheine 4'-phosphoryl)serine is present on serine 413. Residues 465 to 485 form a disordered region; that stretch reads TKPAKNEAPLQTERTDPNKPF. The 433-residue stretch at 527–959 folds into the Ketosynthase family 3 (KS3) 1 domain; the sequence is TEDIAIIGVS…GAYANLIIEE (433 aa). Cysteine 700 (for beta-ketoacyl synthase 1 activity) is an active-site residue. The interval 1114–1242 is N-terminal hotdog fold; sequence HFDVSSINEK…GQCGIGSFEP (129 aa). The region spanning 1114–1397 is the PKS/mFAS DH domain; sequence HFDVSSINEK…LKQLRISNQR (284 aa). Residues 1255–1397 are C-terminal hotdog fold; that stretch reads TKLHHIDQMY…LKQLRISNQR (143 aa). A Carrier 2 domain is found at 1407 to 1485; sequence SNLKARIRSY…ELIDFFADKH (79 aa). The residue at position 1445 (serine 1445) is an O-(pantetheine 4'-phosphoryl)serine. The 419-residue stretch at 1528–1946 folds into the Ketosynthase family 3 (KS3) 2 domain; the sequence is ADGIAIIGMS…GVNAHVILEE (419 aa). Catalysis depends on for beta-ketoacyl synthase 2 activity residues cysteine 1680, histidine 1815, and histidine 1862. The region spanning 2134–2208 is the Carrier 3 domain; the sequence is RINNSSDHHI…DMMDLIAKKQ (75 aa). Residue serine 2168 is modified to O-(pantetheine 4'-phosphoryl)serine. Positions 2234-2514 are thioesterase; the sequence is RPVFWFHGGV…EFCEKLYSNR (281 aa).

Requires pantetheine 4'-phosphate as cofactor.

The protein resides in the cytoplasm. It participates in antibiotic biosynthesis; bacillaene biosynthesis. In terms of biological role, involved in some intermediate steps for the synthesis of the antibiotic polyketide bacillaene which is involved in secondary metabolism. The chain is Polyketide synthase PksR (pksR) from Bacillus subtilis (strain 168).